We begin with the raw amino-acid sequence, 414 residues long: uncharacterized protein (414 aa).

A signal peptide spans 1–20; that stretch reads MKKLLAIGILCIMVTAVMSG. Cys-21 is lipidated: S-archaeol cysteine. Positions 119-389 constitute a Fe/B12 periplasmic-binding domain; that stretch reads RVIVMSSTEI…DLATILHPEA (271 aa).

The protein resides in the cell membrane. This is an uncharacterized protein from Methanocaldococcus jannaschii (strain ATCC 43067 / DSM 2661 / JAL-1 / JCM 10045 / NBRC 100440) (Methanococcus jannaschii).